A 219-amino-acid polypeptide reads, in one-letter code: uncharacterized protein (219 aa).

Residues 28–50 (IVSSLIAGGYALFVSAFTSYVYT) form a helical membrane-spanning segment. Residues 155-218 (EILRESLSEI…EEIEKELEFF (64 aa)) adopt a coiled-coil conformation.

The protein localises to the membrane. This is an uncharacterized protein from Aquifex aeolicus (strain VF5).